Reading from the N-terminus, the 145-residue chain is Granulysin (145 aa).

The signal sequence occupies residues 1 to 22 (MATWALLLLAAMLLGNPGLVFS). One can recognise a Saposin B-type domain in the interval 62–142 (LGRDYRTCLT…EDLRLCIPST (81 aa)). Intrachain disulfides connect C69-C132 and C96-C107.

A 9 kDa form is produced by proteolytic processing of a 15 kDa protein. In terms of tissue distribution, expressed in natural killer and T-cells.

The protein localises to the secreted. Functionally, antimicrobial protein that kills intracellular pathogens. Active against a broad range of microbes, including Gram-positive and Gram-negative bacteria, fungi, and parasites. Kills Mycobacterium tuberculosis. The polypeptide is Granulysin (GNLY) (Homo sapiens (Human)).